A 276-amino-acid polypeptide reads, in one-letter code: Rhomboid-type serine protease 2 (276 aa).

A run of 5 helical transmembrane segments spans residues 27-47 (LPLFTRATVLIIVLTWVLTLV), 77-97 (FPFIHLNIFHTILNIVAFTPL), 109-129 (TSVALFFGPFATIPGLIYVFV), 132-152 (FILHANTPVMGASMWVFLLLG), and 175-195 (WITPLLLVVVTAALLPSSSFL). Serine 144 functions as the Nucleophile in the catalytic mechanism. Histidine 197 is a catalytic residue. A helical transmembrane segment spans residues 198–218 (LAGLLVGYGFGLGYLKFLAPP).

Belongs to the peptidase S54 family.

Its subcellular location is the golgi apparatus membrane. The protein localises to the golgi apparatus. The protein resides in the cis-Golgi network membrane. The catalysed reaction is Cleaves type-1 transmembrane domains using a catalytic dyad composed of serine and histidine that are contributed by different transmembrane domains.. Functionally, probable rhomboid-type serine protease that catalyzes intramembrane proteolysis. The protein is Rhomboid-type serine protease 2 (rbd-2) of Neurospora crassa (strain ATCC 24698 / 74-OR23-1A / CBS 708.71 / DSM 1257 / FGSC 987).